The following is a 626-amino-acid chain: Phosphoenolpyruvate carboxykinase (ATP) 2 (626 aa).

Disordered regions lie at residues 1–23 (MASP…APVN) and 64–86 (PNLV…KHQQ). 324 to 331 (GLSGTGKT) is a binding site for ATP.

This sequence belongs to the phosphoenolpyruvate carboxykinase (ATP) family. Homohexamer.

It is found in the cytoplasm. The enzyme catalyses oxaloacetate + ATP = phosphoenolpyruvate + ADP + CO2. Its pathway is carbohydrate biosynthesis; gluconeogenesis. This is Phosphoenolpyruvate carboxykinase (ATP) 2 (PCK2) from Urochloa panicoides (Panic liverseed grass).